Reading from the N-terminus, the 482-residue chain is C3a anaphylatoxin chemotactic receptor (482 aa).

Residues 1–23 (MASFSAETNSTDLLSQPWNEPPV) lie on the Extracellular side of the membrane. A glycan (N-linked (GlcNAc...) asparagine) is linked at asparagine 9. Residues 24-46 (ILSMVILSLTFLLGLPGNGLVLW) traverse the membrane as a helical segment. Residues 47–57 (VAGLKMQRTVN) are Cytoplasmic-facing. The helical transmembrane segment at 58–80 (TIWFLHLTLADLLCCLSLPFSLA) threads the bilayer. The Extracellular portion of the chain corresponds to 81–96 (HLALQGQWPYGRFLCK). Cysteine 95 and cysteine 172 are joined by a disulfide. A helical membrane pass occupies residues 97–118 (LIPSIIVLNMFASVFLLTAISL). At 119–139 (DRCLVVFKPIWCQNHRNVGMA) the chain is on the cytoplasmic side. A helical membrane pass occupies residues 140 to 160 (CSICGCIWVVAFVMCIPVFVY). Topologically, residues 161–340 (REIFTTDNHN…TPLVAITITR (180 aa)) are extracellular. A sulfotyrosine mark is found at tyrosine 174 and tyrosine 184. N-linked (GlcNAc...) asparagine glycosylation occurs at asparagine 194. Serine 266 carries an O-linked (GalNAc...) serine glycan. Tyrosine 318 carries the post-translational modification Sulfotyrosine. Residues 341-360 (LVVGFLLPSVIMIACYSFIV) traverse the membrane as a helical segment. Over 361 to 377 (FRMQRGRFAKSQSKTFR) the chain is Cytoplasmic. Residues 378–400 (VAVVVVAVFLVCWTPYHIFGVLS) form a helical membrane-spanning segment. The Extracellular segment spans residues 401–417 (LLTDPETPLGKTLMSWD). The chain crosses the membrane as a helical span at residues 418 to 438 (HVCIALASANSCFNPFLYALL). At 439 to 482 (GKDFRKKARQSIQGILEAAFSEELTRSTHCPSNNVISERNSTTV) the chain is on the cytoplasmic side. Serine 459 carries the post-translational modification Phosphoserine. Threonine 463 carries the post-translational modification Phosphothreonine.

It belongs to the G-protein coupled receptor 1 family. As to quaternary structure, interacts with VGF-derived peptide TLQP-21. In terms of processing, among the sulfation sites Tyr-174 is essential for binding of C3a anaphylatoxin. Post-translationally, O-glycosylated. In terms of tissue distribution, widely expressed in several differentiated hematopoietic cell lines, in the lung, spleen, ovary, placenta, small intestine, throughout the brain, heart, and endothelial cells. Mostly expressed in lymphoid tissues.

It localises to the cell membrane. Its function is as follows. Receptor for the chemotactic and inflammatory peptide anaphylatoxin C3a. This receptor stimulates chemotaxis, granule enzyme release and superoxide anion production. This Homo sapiens (Human) protein is C3a anaphylatoxin chemotactic receptor (C3AR1).